The chain runs to 28 residues: M-poneritoxin-Dq4a (28 aa).

At A28 the chain carries Alanine amide.

As to expression, expressed by the venom gland.

It localises to the secreted. Its function is as follows. The synthetic peptide has weak antimicrobial activity against Gram-negative bacterium E.coli ATCC 10536. It does not show antimicrobial activity against the Gram-positive bacteria B.amyloliquefacies S499, L.monocytogenes 2231 and S.aureus ATCC 29213, against the Gram-negative bacteria P.putida BTP1 and P.aeruginosa PaO1, or against the fungi S.cerevisiae, R.mucilaginosa, C.cucumerinum, F.oxysporum and B.cinerea. The chain is M-poneritoxin-Dq4a from Dinoponera quadriceps (South American ant).